The primary structure comprises 309 residues: uncharacterized protein (309 aa).

Residues 23-39 (RFNVAIIGGTGGLGRAI) traverse the membrane as a helical segment.

This sequence belongs to the NmrA-type oxidoreductase family.

It localises to the membrane. This is an uncharacterized protein from Saccharomyces cerevisiae (strain ATCC 204508 / S288c) (Baker's yeast).